The chain runs to 616 residues: Zinc metalloproteinase nas-36 (616 aa).

Residues 1–21 form the signal peptide; that stretch reads MRRFCRLLFLNSLLSISICKA. The propeptide occupies 22-125; that stretch reads QNPAHLVADE…SKDKTKRLRR (104 aa). The region spanning 126 to 321 is the Peptidase M12A domain; sequence SFVSDKTATW…VATINTAYCK (196 aa). 9 cysteine pairs are disulfide-bonded: cysteine 168/cysteine 320, cysteine 191/cysteine 210, cysteine 324/cysteine 345, cysteine 347/cysteine 356, cysteine 367/cysteine 396, cysteine 424/cysteine 444, cysteine 518/cysteine 549, cysteine 522/cysteine 554, and cysteine 534/cysteine 539. N-linked (GlcNAc...) asparagine glycosylation occurs at asparagine 173. Histidine 218 serves as a coordination point for Zn(2+). Residue glutamate 219 is part of the active site. 2 residues coordinate Zn(2+): histidine 222 and histidine 228. Residues 316 to 357 enclose the EGF-like domain; the sequence is NTAYCKEECKSEKTECEYGGYMRPSKCSECLCPDGLGGEKCE. In terms of domain architecture, CUB spans 367–481; the sequence is CGGILELSDE…IGFKIQVRST (115 aa). The 50-residue stretch at 506–555 folds into the TSP type-1 domain; the sequence is PNVWADWGEWSMCSRTCGGCGIRSRVRSCRSKKCEGRRQEFGTCNLKACP.

Requires Zn(2+) as cofactor.

The protein localises to the secreted. Functionally, mtalloprotease. Involved in molting, a process during larval stages in which a new cuticle is formed and the old cuticle is shed. In Caenorhabditis briggsae, this protein is Zinc metalloproteinase nas-36.